The chain runs to 317 residues: UV DNA damage endonuclease (317 aa).

It belongs to the uve1/UvsE family.

Functionally, component in a DNA repair pathway. Removal of UV LIGHT damaged nucleotides. Recognizes pyrimidine dimers and cleave a phosphodiester bond immediately 5' to the lesion. This is UV DNA damage endonuclease from Bacillus cereus (strain B4264).